The chain runs to 147 residues: Shadow of prion protein (147 aa).

Residues 1-24 (MNWTTATCWALLLATAFLCDSCSA) form the signal peptide. Residues 26 to 43 (GGRGGARGSARGVRGGAR) show a composition bias toward gly residues. The segment at 26 to 46 (GGRGGARGSARGVRGGARGAS) is disordered. An N-linked (GlcNAc...) asparagine glycan is attached at N107. G122 carries GPI-anchor amidated glycine lipidation. Residues 123 to 147 (SGSVHSPRICLLLSGTLGALELLRP) constitute a propeptide, removed in mature form.

The protein belongs to the SPRN family. Post-translationally, N-glycosylated. As to expression, almost exclusively expressed in brain, with weak expression in lung and stomach.

It is found in the cell membrane. Functionally, prion-like protein that has PrP(C)-like neuroprotective activity. May act as a modulator for the biological actions of normal and abnormal PrP. This Rattus norvegicus (Rat) protein is Shadow of prion protein (Sprn).